Here is a 280-residue protein sequence, read N- to C-terminus: Succinate dehydrogenase [ubiquinone] iron-sulfur subunit, mitochondrial (280 aa).

The N-terminal 28 residues, 1–28 (MAAVVALSLRRRLPATTLGGACLQASRG), are a transit peptide targeting the mitochondrion. A 2Fe-2S ferredoxin-type domain is found at 40 to 133 (KKFAIYRWDP…VSKIYPLPHM (94 aa)). Lysine 51 and lysine 55 each carry N6-acetyllysine. [2Fe-2S] cluster contacts are provided by cysteine 93, cysteine 98, cysteine 101, and cysteine 113. An interaction with SDHAF1 region spans residues 146-218 (FYAQYKSIEP…PAVLMQAYRW (73 aa)). Positions 176–206 (EREKLDGLYECILCACCSTSCPSYWWNGDKY) constitute a 4Fe-4S ferredoxin-type domain. [4Fe-4S] cluster contacts are provided by cysteine 186, cysteine 189, and cysteine 192. Cysteine 196 provides a ligand contact to [3Fe-4S] cluster. Tryptophan 201 serves as a coordination point for a ubiquinone. [3Fe-4S] cluster contacts are provided by cysteine 243 and cysteine 249. Cysteine 253 is a binding site for [4Fe-4S] cluster.

The protein belongs to the succinate dehydrogenase/fumarate reductase iron-sulfur protein family. Component of complex II composed of four subunits: the flavoprotein (FP) SDHA, iron-sulfur protein (IP) SDHB, and a cytochrome b560 composed of SDHC and SDHD. Interacts with SDHAF1; the interaction is required for iron-sulfur cluster incorporation into SDHB. As to quaternary structure, (Microbial infection) Interacts with JC virus small t antigen. Requires [2Fe-2S] cluster as cofactor. [3Fe-4S] cluster serves as cofactor. It depends on [4Fe-4S] cluster as a cofactor.

The protein resides in the mitochondrion inner membrane. The catalysed reaction is a quinone + succinate = fumarate + a quinol. The enzyme catalyses (R)-malate + a quinone = enol-oxaloacetate + a quinol. It carries out the reaction (S)-malate + a quinone = enol-oxaloacetate + a quinol. It participates in carbohydrate metabolism; tricarboxylic acid cycle; fumarate from succinate (eukaryal route): step 1/1. Enol-oxaloacetate inhibits the succinate dehydrogenase activity. Its function is as follows. Iron-sulfur protein (IP) subunit of the succinate dehydrogenase complex (mitochondrial respiratory chain complex II), responsible for transferring electrons from succinate to ubiquinone (coenzyme Q). SDH also oxidizes malate to the non-canonical enol form of oxaloacetate, enol-oxaloacetate. Enol-oxaloacetate, which is a potent inhibitor of the succinate dehydrogenase activity, is further isomerized into keto-oxaloacetate. This Homo sapiens (Human) protein is Succinate dehydrogenase [ubiquinone] iron-sulfur subunit, mitochondrial (SDHB).